A 457-amino-acid chain; its full sequence is Dolichol phosphate-mannose mannosyltransferase (457 aa).

Over 1–12 the chain is Cytoplasmic; it reads MKRLAKAAFSQN. A helical transmembrane segment spans residues 13–33; sequence SLTAPIVSTFVYLISVVRVVL. Residues 34–91 are Extracellular-facing; that stretch reads NGNWPVTSSDTAMFQHIGWMVFSGKRYYIDAWDPKPPLTLELATIIAYISNGDPHLQH. Residues 92 to 112 form a helical membrane-spanning segment; the sequence is TLSVVSTIVAGILLTYLISHI. At 113-120 the chain is on the cytoplasmic side; sequence TSEITGNQ. Residues 121–141 form a helical membrane-spanning segment; the sequence is FAGLLSGIVFITFPVIHYSAV. The Extracellular portion of the chain corresponds to 142 to 173; that stretch reads FGYEPKYFVFLFGLGSIYLSRNPKPILSGAAA. The chain crosses the membrane as a helical span at residues 174 to 194; sequence AASAGMWQFAIIFPIISFGII. The Cytoplasmic segment spans residues 195 to 211; sequence SRRKSKDLILKYVFGAT. A helical membrane pass occupies residues 212 to 232; it reads IIAFISLLPIYLQGGLVAMTV. Residues 233-259 are Extracellular-facing; that stretch reads EVIIAPLYAGETQSFLYRLVKGVTHLK. Residues 260 to 280 traverse the membrane as a helical segment; it reads LMIPIALLGMAGILLGFLDDI. Residues 281 to 283 are Cytoplasmic-facing; sequence RER. The helical transmembrane segment at 284 to 304 threads the bilayer; sequence WWVVGLLLWFCIQIFILDYDG. Topologically, residues 305 to 307 are extracellular; it reads ADD. Residues 308-328 form a helical membrane-spanning segment; that stretch reads LFLGIILVSMGIGFAFEKLST. Over 329 to 337 the chain is Cytoplasmic; it reads KYESERINS. Residues 338 to 358 form a helical membrane-spanning segment; that stretch reads IVTAVVVCMLIWQVVTLGGVG. At 359 to 457 the chain is on the extracellular side; it reads VITNPYSYSG…EEKCGKWRLP (99 aa).

Its subcellular location is the cell membrane. The protein operates within cell surface structure biogenesis; S-layer biogenesis. It functions in the pathway protein modification; protein glycosylation. Its function is as follows. Involved in the assembly of a N-linked pentasaccharide that decorates the S-layer glycoprotein and flagellins. Transfers mannose, the terminal pentasaccharide residue, from its dedicated dolichol phosphate carrier to the protein-bound glycan comprising the first four subunits of the N-linked pentasaccharide. The protein is Dolichol phosphate-mannose mannosyltransferase (aglS) of Haloferax volcanii (strain ATCC 29605 / DSM 3757 / JCM 8879 / NBRC 14742 / NCIMB 2012 / VKM B-1768 / DS2) (Halobacterium volcanii).